We begin with the raw amino-acid sequence, 643 residues long: Threonine--tRNA ligase (643 aa).

One can recognise a TGS domain in the interval 1 to 61; it reads MPIITLPDGS…SEDATLEIIT (61 aa). The interval 243–534 is catalytic; the sequence is DHRKIGKALD…ITEEYAGFFP (292 aa). Cys334, His385, and His511 together coordinate Zn(2+).

This sequence belongs to the class-II aminoacyl-tRNA synthetase family. Homodimer. Zn(2+) is required as a cofactor.

It localises to the cytoplasm. The enzyme catalyses tRNA(Thr) + L-threonine + ATP = L-threonyl-tRNA(Thr) + AMP + diphosphate + H(+). Functionally, catalyzes the attachment of threonine to tRNA(Thr) in a two-step reaction: L-threonine is first activated by ATP to form Thr-AMP and then transferred to the acceptor end of tRNA(Thr). Also edits incorrectly charged L-seryl-tRNA(Thr). The protein is Threonine--tRNA ligase of Glaesserella parasuis serovar 5 (strain SH0165) (Haemophilus parasuis).